A 369-amino-acid polypeptide reads, in one-letter code: MRN complex-interacting protein (369 aa).

A Phosphoserine modification is found at Ser115. Disordered stretches follow at residues 122–150 (GGGV…PRKR), 209–245 (PSFT…PCPA), and 282–317 (AQAE…TPMP). The Nuclear localization signal (NLS) motif lies at 148-151 (RKRK). The segment covering 221–230 (KGRESSREDL) has biased composition (basic and acidic residues). The segment at 223–259 (RESSREDLDTMELVPRGEPPCPAQQVRTMSKWEQCLG) is necessary for the association with the MRN complex.

It belongs to the MRNIP family. As to quaternary structure, associates with the MRE11-RAD50-NBN (MRN) damage-sensing complex; this association is constitutive. Interacts with MRE11. Interacts with NBN. Interacts with RAD50. In terms of processing, phosphorylated; phosphorylation is constitutive and occurs in the absence of any DNA-damaging stimulus. Phosphorylation on Ser-115 is necessary for its nuclear retention.

The protein resides in the nucleus. It localises to the nucleoplasm. In terms of biological role, plays a role in the cellular response to DNA damage and the maintenance of genome stability through its association with the MRN damage-sensing complex. Promotes chromatin loading and activity of the MRN complex to facilitate subsequent ATM-mediated DNA damage response signaling and DNA repair. This chain is MRN complex-interacting protein, found in Bos taurus (Bovine).